The following is a 206-amino-acid chain: 2,3-bisphosphoglycerate-dependent phosphoglycerate mutase (206 aa).

Residues 9-16 (RHGQSEWN), 22-23 (TG), Arg61, 88-91 (ERDY), Lys99, 115-116 (RR), and 159-160 (GN) contribute to the substrate site. The Tele-phosphohistidine intermediate role is filled by His10. The Proton donor/acceptor role is filled by Glu88.

Belongs to the phosphoglycerate mutase family. BPG-dependent PGAM subfamily. As to quaternary structure, homodimer.

It carries out the reaction (2R)-2-phosphoglycerate = (2R)-3-phosphoglycerate. It functions in the pathway carbohydrate degradation; glycolysis; pyruvate from D-glyceraldehyde 3-phosphate: step 3/5. Functionally, catalyzes the interconversion of 2-phosphoglycerate and 3-phosphoglycerate. The polypeptide is 2,3-bisphosphoglycerate-dependent phosphoglycerate mutase (Brucella ovis (strain ATCC 25840 / 63/290 / NCTC 10512)).